A 323-amino-acid chain; its full sequence is L-lactate dehydrogenase (323 aa).

Residues V18, D39, R44, Y69, and 83-84 (GA) each bind NAD(+). Substrate is bound by residues Q86 and R92. NAD(+)-binding positions include T105, 122–124 (AAN), and S147. Position 124–127 (124–127 (NPVD)) interacts with substrate. 152–155 (DTAR) provides a ligand contact to substrate. Catalysis depends on H179, which acts as the Proton acceptor. Position 223 is a phosphotyrosine (Y223). Residue T232 participates in substrate binding.

Belongs to the LDH/MDH superfamily. LDH family. As to quaternary structure, homotetramer.

It localises to the cytoplasm. It carries out the reaction (S)-lactate + NAD(+) = pyruvate + NADH + H(+). Its pathway is fermentation; pyruvate fermentation to lactate; (S)-lactate from pyruvate: step 1/1. Catalyzes the conversion of lactate to pyruvate. In Pediococcus acidilactici, this protein is L-lactate dehydrogenase.